Reading from the N-terminus, the 98-residue chain is NADH-ubiquinone oxidoreductase chain 4L (98 aa).

A run of 3 helical transmembrane segments spans residues Met-1–Ile-21, Ser-28–Ile-48, and Ala-59–Val-79.

It belongs to the complex I subunit 4L family. Core subunit of respiratory chain NADH dehydrogenase (Complex I) which is composed of 45 different subunits.

The protein localises to the mitochondrion inner membrane. The enzyme catalyses a ubiquinone + NADH + 5 H(+)(in) = a ubiquinol + NAD(+) + 4 H(+)(out). Functionally, core subunit of the mitochondrial membrane respiratory chain NADH dehydrogenase (Complex I) which catalyzes electron transfer from NADH through the respiratory chain, using ubiquinone as an electron acceptor. Part of the enzyme membrane arm which is embedded in the lipid bilayer and involved in proton translocation. The chain is NADH-ubiquinone oxidoreductase chain 4L (MT-ND4L) from Perameles gunnii (Eastern barred bandicoot).